The primary structure comprises 328 residues: P2Y purinoceptor 3 (328 aa).

Residues 1–22 (MSMANFTAGRNSCTFQEEFKQV) are Extracellular-facing. Residue Asn5 is glycosylated (N-linked (GlcNAc...) asparagine). Residues 23 to 43 (LLPLVYSVVFLLGLPLNAVVI) form a helical membrane-spanning segment. Residues 44-57 (GQIWLARKALTRTT) are Cytoplasmic-facing. Residues 58–78 (IYMLNLATADLLYVCSLPLLI) traverse the membrane as a helical segment. Residues 79–96 (YNYTQKDYWPFGDFTCKF) are Extracellular-facing. Cys94 and Cys172 are joined by a disulfide. The chain crosses the membrane as a helical span at residues 97–117 (VRFQFYTNLHGSILFLTCISV). Over 118–139 (QRYMGICHPLASWHKKKGKKLT) the chain is Cytoplasmic. The chain crosses the membrane as a helical span at residues 140–160 (WLVCAAVWFIVIAQCLPTFVF). Residues 161–189 (ASTGTQRNRTVCYDLSPPDRSASYFPYGI) are Extracellular-facing. Residues 190–210 (TLTITGFLLPFAAILACYCSM) form a helical membrane-spanning segment. The Cytoplasmic segment spans residues 211-231 (ARILCQKDELIGLAVHKKKDK). The helical transmembrane segment at 232-252 (AVRMIIIVVIVFSISFFPFHL) threads the bilayer. The Extracellular portion of the chain corresponds to 253-275 (TKTIYLIVRSSPTLPCPTLQAFA). The chain crosses the membrane as a helical span at residues 276 to 298 (IAYKCTRPFASMNSVLDPILFYF). Over 299–323 (TQRKFRESTRYLLDKMSSKWRHDHC) the chain is Cytoplasmic.

It belongs to the G-protein coupled receptor 1 family.

It localises to the cell membrane. In terms of biological role, receptor for extracellular UDP &gt; ADP = UTP. The activity of this receptor is mediated by G proteins which activate a phosphatidylinositol-calcium second messenger system. The sequence is that of P2Y purinoceptor 3 (P2RY3) from Meleagris gallopavo (Wild turkey).